A 139-amino-acid chain; its full sequence is MNFKYIVAVSFLIASAYARSVQNDEQSLSQRDVLEEESLREIRGIGGVLLSAGKAALKGLAKVLAEKYANGKRTAEDHEVMKRLEAVMRDLDSLDHPEEASERETRGFNQDEIAKEKRILGPVLGLVGNALGGLIKKIG.

An N-terminal signal peptide occupies residues 1 to 18; that stretch reads MNFKYIVAVSFLIASAYA. Residues 19-43 constitute a propeptide that is removed on maturation; sequence RSVQNDEQSLSQRDVLEEESLREIR. Asn70 bears the Asparagine amide mark. A propeptide spanning residues 74–118 is cleaved from the precursor; that stretch reads TAEDHEVMKRLEAVMRDLDSLDHPEEASERETRGFNQDEIAKEKR. The residue at position 138 (Ile138) is an Isoleucine amide.

This sequence belongs to the bombinin family. In terms of tissue distribution, expressed by the skin glands.

It localises to the secreted. Maximin-4 shows antibacterial activity against both Gram-positive and Gram-negative bacteria. It also shows antimicrobial activity against the fungus C.albicans, but not against A.flavus nor P.uticale. It has little hemolytic activity. It does not possess a significant cytotoxicity against tumor cell lines. It does not possess a significant anti-HIV activity. Its function is as follows. Maximin-H3 shows antibacterial activity against both Gram-positive and Gram-negative bacteria. It also shows antimicrobial activity against the fungus C.albicans. Shows strong hemolytic activity. In Bombina maxima (Giant fire-bellied toad), this protein is Maximins 4/H3 type 6.